The sequence spans 227 residues: N-acetyltransferase 8 (227 aa).

Residues 1 to 35 (MASFRIRQFQERDYKQVVDVFSRGMEEHIPTAFRH) lie on the Cytoplasmic side of the membrane. The chain crosses the membrane as a helical; Signal-anchor for type II membrane protein span at residues 36–56 (LLTLPRTLLLLAVVPLAIVLV). Residues 57 to 227 (SGSWFLAVVC…PLPSAQKYEL (171 aa)) lie on the Lumenal side of the membrane. One can recognise an N-acetyltransferase domain in the interval 69-217 (FLFLFLWFLA…VDVSLIHFIY (149 aa)).

This sequence belongs to the NAT8 family. In terms of tissue distribution, expressed in brain (at protein level).

Its subcellular location is the endoplasmic reticulum-Golgi intermediate compartment membrane. It is found in the endoplasmic reticulum membrane. The enzyme catalyses L-lysyl-[protein] + acetyl-CoA = N(6)-acetyl-L-lysyl-[protein] + CoA + H(+). It carries out the reaction an S-substituted L-cysteine + acetyl-CoA = an N-acetyl-L-cysteine-S-conjugate + CoA + H(+). Its pathway is sulfur metabolism; glutathione metabolism. Functionally, endoplasmic reticulum (ER)-membrane-bound lysine N-acetyltransferase catalyzing the N6-acetylation of lysine residues in the lumen of the ER in various proteins, including PROM1 and BACE1, using acetyl-CoA as acetyl donor. Thereby, may regulate apoptosis through the acetylation and the regulation of the expression of PROM1. May also regulate amyloid beta-peptide secretion through acetylation of BACE1 and the regulation of its expression in neurons. N(6)-lysine acetylation in the ER maintains protein homeostasis and regulates reticulophagy. Alternatively, acetylates the free alpha-amino group of cysteine S-conjugates to form mercapturic acids. This is the final step in a major route for detoxification of a wide variety of reactive electrophiles which starts with their incorporation into glutathione S-conjugates. The glutathione S-conjugates are then further processed into cysteine S-conjugates and finally mercapturic acids which are water soluble and can be readily excreted in urine or bile. The chain is N-acetyltransferase 8 (Nat8) from Mus musculus (Mouse).